Consider the following 365-residue polypeptide: DNA N6-methyl methyltransferase (365 aa).

The protein belongs to the MT-A70-like family.

It carries out the reaction a 2'-deoxyadenosine in DNA + S-adenosyl-L-methionine = an N(6)-methyl-2'-deoxyadenosine in DNA + S-adenosyl-L-homocysteine + H(+). Methylates DNA on the 6th position of adenine (N(6)-methyladenosine). N(6)-methyladenosine (m6A) DNA is involved in epigenetic transgenerational inheritance. The chain is DNA N6-methyl methyltransferase from Caenorhabditis elegans.